Here is a 166-residue protein sequence, read N- to C-terminus: Large ribosomal subunit protein uL10 (166 aa).

Belongs to the universal ribosomal protein uL10 family. In terms of assembly, part of the ribosomal stalk of the 50S ribosomal subunit. The N-terminus interacts with L11 and the large rRNA to form the base of the stalk. The C-terminus forms an elongated spine to which L12 dimers bind in a sequential fashion forming a multimeric L10(L12)X complex.

Forms part of the ribosomal stalk, playing a central role in the interaction of the ribosome with GTP-bound translation factors. The sequence is that of Large ribosomal subunit protein uL10 from Geobacillus sp. (strain WCH70).